The chain runs to 327 residues: MFDAAPIKKVSVVIPVYNEQESLPELIRRTTTACESLGKAWEILLIDDGSSDSSAELMVKASQEADSHIISILLNRNYGQHAAIMAGFSHVSGDLIITLDADLQNPPEEIPRLVAKADEGFDVVGTVRQNRQDSLFRKSASKIINLLIQRTTGKAMGDYGCMLRAYRRPIIDTMLRCHERSTFIPILANIFARRATEIPVHHAEREFGDSKYSFMRLINLMYDLVTCLTTTPLRLLSLLGSVIAIGGFSLSVLLIVLRLALGPQWAAEGVFMLFAVLFTFIGAQFIGMGLLGEYIGRIYNDVRARPRYFVQQVIYPESTSFTEESHQ.

Over 1-235 (MFDAAPIKKV…TCLTTTPLRL (235 aa)) the chain is Cytoplasmic. Residues 236 to 256 (LSLLGSVIAIGGFSLSVLLIV) form a helical membrane-spanning segment. Over 257-269 (LRLALGPQWAAEG) the chain is Periplasmic. A helical transmembrane segment spans residues 270–290 (VFMLFAVLFTFIGAQFIGMGL). The Cytoplasmic segment spans residues 291–327 (LGEYIGRIYNDVRARPRYFVQQVIYPESTSFTEESHQ).

It belongs to the glycosyltransferase 2 family.

The protein resides in the cell inner membrane. The catalysed reaction is UDP-4-deoxy-4-formamido-beta-L-arabinose + di-trans,octa-cis-undecaprenyl phosphate = 4-deoxy-4-formamido-alpha-L-arabinopyranosyl di-trans,octa-cis-undecaprenyl phosphate + UDP. It participates in glycolipid biosynthesis; 4-amino-4-deoxy-alpha-L-arabinose undecaprenyl phosphate biosynthesis; 4-amino-4-deoxy-alpha-L-arabinose undecaprenyl phosphate from UDP-4-deoxy-4-formamido-beta-L-arabinose and undecaprenyl phosphate: step 1/2. Its pathway is bacterial outer membrane biogenesis; lipopolysaccharide biosynthesis. Catalyzes the transfer of 4-deoxy-4-formamido-L-arabinose from UDP to undecaprenyl phosphate. The modified arabinose is attached to lipid A and is required for resistance to polymyxin and cationic antimicrobial peptides. The chain is Undecaprenyl-phosphate 4-deoxy-4-formamido-L-arabinose transferase from Salmonella newport (strain SL254).